We begin with the raw amino-acid sequence, 262 residues long: Acetylglutamate kinase (262 aa).

Substrate-binding positions include 48 to 49, Arg70, and Asn162; that span reads GG.

It belongs to the acetylglutamate kinase family. ArgB subfamily.

The protein localises to the cytoplasm. The catalysed reaction is N-acetyl-L-glutamate + ATP = N-acetyl-L-glutamyl 5-phosphate + ADP. Its pathway is amino-acid biosynthesis; L-arginine biosynthesis; N(2)-acetyl-L-ornithine from L-glutamate: step 2/4. In terms of biological role, catalyzes the ATP-dependent phosphorylation of N-acetyl-L-glutamate. The sequence is that of Acetylglutamate kinase from Vibrio cholerae serotype O1 (strain ATCC 39541 / Classical Ogawa 395 / O395).